Here is a 331-residue protein sequence, read N- to C-terminus: Phenylalanine--tRNA ligase alpha subunit (331 aa).

A Mg(2+)-binding site is contributed by Glu256.

This sequence belongs to the class-II aminoacyl-tRNA synthetase family. Phe-tRNA synthetase alpha subunit type 1 subfamily. In terms of assembly, tetramer of two alpha and two beta subunits. Mg(2+) serves as cofactor.

The protein localises to the cytoplasm. The enzyme catalyses tRNA(Phe) + L-phenylalanine + ATP = L-phenylalanyl-tRNA(Phe) + AMP + diphosphate + H(+). In Colwellia psychrerythraea (strain 34H / ATCC BAA-681) (Vibrio psychroerythus), this protein is Phenylalanine--tRNA ligase alpha subunit.